The sequence spans 552 residues: Thermosome subunit beta (552 aa).

The protein belongs to the TCP-1 chaperonin family. Forms a Heterooligomeric complex of two stacked nine-membered rings; one of alpha and the other of beta subunits. Post-translationally, the N-terminus is blocked.

Functionally, molecular chaperone; binds unfolded polypeptides in vitro, and has a weak ATPase activity. This chain is Thermosome subunit beta (thsB), found in Sulfurisphaera tokodaii (strain DSM 16993 / JCM 10545 / NBRC 100140 / 7) (Sulfolobus tokodaii).